We begin with the raw amino-acid sequence, 298 residues long: Tyrosine recombinase XerC (298 aa).

A Core-binding (CB) domain is found at 1–84; the sequence is MNHIQEAFLN…TLRTLYEYWM (84 aa). One can recognise a Tyr recombinase domain in the interval 105–286; sequence YLPQFSLEEE…SNQQLRKVYL (182 aa). Residues arginine 145, lysine 169, histidine 238, arginine 241, and histidine 264 contribute to the active site. Tyrosine 273 serves as the catalytic O-(3'-phospho-DNA)-tyrosine intermediate.

It belongs to the 'phage' integrase family. XerC subfamily. As to quaternary structure, forms a cyclic heterotetrameric complex composed of two molecules of XerC and two molecules of XerD.

It is found in the cytoplasm. Functionally, site-specific tyrosine recombinase, which acts by catalyzing the cutting and rejoining of the recombining DNA molecules. The XerC-XerD complex is essential to convert dimers of the bacterial chromosome into monomers to permit their segregation at cell division. It also contributes to the segregational stability of plasmids. In Staphylococcus aureus, this protein is Tyrosine recombinase XerC.